The following is an 82-amino-acid chain: RNA-binding protein Hfq (82 aa).

Residues 10-70 (DTFLNHVRKN…ISTIMPAQPV (61 aa)) enclose the Sm domain.

This sequence belongs to the Hfq family. In terms of assembly, homohexamer.

In terms of biological role, RNA chaperone that binds small regulatory RNA (sRNAs) and mRNAs to facilitate mRNA translational regulation in response to envelope stress, environmental stress and changes in metabolite concentrations. Also binds with high specificity to tRNAs. In Parvibaculum lavamentivorans (strain DS-1 / DSM 13023 / NCIMB 13966), this protein is RNA-binding protein Hfq.